The chain runs to 83 residues: Small ribosomal subunit protein bS16 (83 aa).

Belongs to the bacterial ribosomal protein bS16 family.

The sequence is that of Small ribosomal subunit protein bS16 from Magnetococcus marinus (strain ATCC BAA-1437 / JCM 17883 / MC-1).